We begin with the raw amino-acid sequence, 324 residues long: NADH-ubiquinone oxidoreductase chain 1 (324 aa).

9 helical membrane-spanning segments follow: residues 9 to 29 (IINP…LTLL), 43 to 63 (PNIV…KLFI), 75 to 95 (FLFL…WAPM), 106 to 126 (LGVL…LGSG), 146 to 166 (ISYE…TGGF), 177 to 197 (SIWL…STLA), 237 to 257 (ILLM…IPAF), 259 to 279 (ELTA…FLWV), and 299 to 319 (FLPL…AMAG).

The protein belongs to the complex I subunit 1 family.

The protein resides in the mitochondrion inner membrane. It catalyses the reaction a ubiquinone + NADH + 5 H(+)(in) = a ubiquinol + NAD(+) + 4 H(+)(out). Functionally, core subunit of the mitochondrial membrane respiratory chain NADH dehydrogenase (Complex I) that is believed to belong to the minimal assembly required for catalysis. Complex I functions in the transfer of electrons from NADH to the respiratory chain. The immediate electron acceptor for the enzyme is believed to be ubiquinone. In Salmo salar (Atlantic salmon), this protein is NADH-ubiquinone oxidoreductase chain 1 (MT-ND1).